A 1006-amino-acid polypeptide reads, in one-letter code: Unconventional myosin-Id (1006 aa).

Ala-2 is subject to N-acetylalanine. Residues 9–695 (FGKADFVLMD…TLFTLEELRA (687 aa)) enclose the Myosin motor domain. 102–109 (GESGAGKT) provides a ligand contact to ATP. Position 200 is a phosphoserine (Ser-200). At Tyr-536 the chain carries Phosphotyrosine. Residues 572–594 (MIALVDNLASKEPYYVRCIKPND) are actin-binding. IQ domains follow at residues 699-719 (VRIV…MRYK) and 721-741 (TKAA…SYIH). The TH1 domain maps to 812 to 1005 (GQRADLGLQR…RSGFILSVPG (194 aa)).

It belongs to the TRAFAC class myosin-kinesin ATPase superfamily. Myosin family. As to quaternary structure, interacts (via the two IQ motifs) with calmodulin. Binds an additional calmodulin chain via a third, C-terminal region. Interacts with F-actin.

It is found in the cytoplasm. The protein resides in the perikaryon. It localises to the cell projection. Its subcellular location is the dendrite. The protein localises to the early endosome. It is found in the cell cortex. Unconventional myosin that functions as actin-based motor protein with ATPase activity. Plays a role in endosomal protein trafficking, and especially in the transfer of cargo proteins from early to recycling endosomes. Required for normal planar cell polarity in ciliated tracheal cells, for normal rotational polarity of cilia, and for coordinated, unidirectional ciliary movement in the trachea. Required for normal, polarized cilia organization in brain ependymal epithelial cells. The chain is Unconventional myosin-Id (MYO1D) from Bos taurus (Bovine).